Here is a 373-residue protein sequence, read N- to C-terminus: Inhibitor of nuclear factor kappa-B kinase-interacting protein (373 aa).

The span at 1-11 (MSEVKSRKKPG) shows a compositional bias: basic residues. The disordered stretch occupies residues 1–38 (MSEVKSRKKPGPKVAAPEPEKRSDGRKNPEARGDAGWA). Positions 18–33 (EPEKRSDGRKNPEARG) are enriched in basic and acidic residues. The helical transmembrane segment at 43–59 (GLSLLSLAMTLGLAWLV) threads the bilayer. Coiled-coil stretches lie at residues 86 to 257 (LQSK…NKLS) and 285 to 324 (QDLIGTERKMEELTMQMFNMEDDMLRAVSEIMEMQKTLEG). A glycan (N-linked (GlcNAc...) asparagine) is linked at Asn-151.

Post-translationally, N-glycosylated at Asn-151.

It localises to the endoplasmic reticulum membrane. In terms of biological role, target of p53/TP53 with pro-apoptotic function. The sequence is that of Inhibitor of nuclear factor kappa-B kinase-interacting protein (Ikbip) from Mus musculus (Mouse).